A 1012-amino-acid polypeptide reads, in one-letter code: Putative cellulose synthase-like protein D5 (1012 aa).

The tract at residues 1-85 (MSGDYANYTV…APSSNKSLLV (85 aa)) is disordered. The segment covering 20–37 (PSGGAPPAAPSAGGARPG) has biased composition (low complexity). Positions 57 to 69 (GGGDDGAKMDRRL) are enriched in basic and acidic residues. The next 2 membrane-spanning stretches (helical) occupy residues 150–170 (ILSPYRLLVLVRFVALFLFLV) and 180–200 (ALWLWGISIVCEFWFAFSWLL). Aspartate 280 is a catalytic residue. Residues 597–620 (PRQGSEAMPGAGGGRSGGGSVGGD) are disordered. Gly residues predominate over residues 606 to 618 (GAGGGRSGGGSVG). Residue aspartate 717 is part of the active site. The next 6 membrane-spanning stretches (helical) occupy residues 799–819 (LFLIMYCLLPALSLFSGQFIV), 825–845 (TFLSYLLLITITLMLLCLLEV), 871–891 (LAAVLQGLLKVVAGIEISFTL), 914–934 (SLFIPPLAVIGINIIALVVGV), 948–968 (LLGGGFFSFWVLAHYYPFAKG), and 978–998 (TIVYVWAGLISITVSLLWITI).

Belongs to the glycosyltransferase 2 family. Plant cellulose synthase-like D subfamily.

Its subcellular location is the golgi apparatus membrane. Thought to be a Golgi-localized beta-glycan synthase that polymerize the backbones of noncellulosic polysaccharides (hemicelluloses) of plant cell wall. The chain is Putative cellulose synthase-like protein D5 (CSLD5) from Oryza sativa subsp. indica (Rice).